The sequence spans 217 residues: Magnetosome protein MamA (217 aa).

TPR repeat units lie at residues 12–44, 46–79, 80–113, 114–147, 148–181, and 182–215; these read VTLY…NDDI, QVYY…DAFD, VEVA…APDN, IKVA…NPVN, FNVR…RPNE, and GKVH…DERS. Positions 41-112 are N-terminal domain; it reads NDDIRQVYYR…LERSIADAPD (72 aa). The C-terminal domain stretch occupies residues 113 to 217; sequence NIKVATVLGL…ANELDERSAV (105 aa).

The protein belongs to the magnetosome MamA family. As to quaternary structure, forms round, 20 nm diameter complexes with a central cavity. Probably binds MamC. Interacts with full-length Mms6.

The protein resides in the magnetosome membrane. Its function is as follows. Probably forms a large homooligomer on which other magnetosome subunits assemble. Required for formation of functional magnetosomes from pre-existing vesicles. In Magnetospirillum gryphiswaldense (strain DSM 6361 / JCM 21280 / NBRC 15271 / MSR-1), this protein is Magnetosome protein MamA.